Here is a 1074-residue protein sequence, read N- to C-terminus: Phospholipase D1 (1074 aa).

The region spanning 81-212 is the PX domain; sequence IKAQVLEVER…TEFLDISQLS (132 aa). Residues 219 to 328 enclose the PH domain; that stretch reads PKGIEGMIMK…WGGAIEEFIQ (110 aa). S-palmitoyl cysteine attachment occurs at residues Cys-240 and Cys-241. One can recognise a PLD phosphodiesterase 1 domain in the interval 459–486; sequence YLWAHHEKLVIIDQSVAFVGGIDLAYGR. The catalytic stretch occupies residues 463-928; it reads HHEKLVIIDQ…MLGKRDSEMA (466 aa). 3 positions are modified to phosphoserine: Ser-499, Ser-561, and Ser-629. The PLD phosphodiesterase 2 domain occupies 891-918; it reads ELIYVHSKLLIADDNTVIIGSANINDRS.

Belongs to the phospholipase D family. Interacts with PIP5K1B. As to expression, expressed abundantly in the pancreas and heart and at high levels in brain, placenta, spleen, uterus and small intestine.

It localises to the cytoplasm. Its subcellular location is the perinuclear region. It is found in the endoplasmic reticulum membrane. The protein localises to the golgi apparatus membrane. The protein resides in the late endosome membrane. The catalysed reaction is a 1,2-diacyl-sn-glycero-3-phosphocholine + H2O = a 1,2-diacyl-sn-glycero-3-phosphate + choline + H(+). It carries out the reaction ethanol + a 1,2-diacyl-sn-glycero-3-phosphocholine = 1,2-diacyl-sn-glycero-3-phosphoethanol + choline. It catalyses the reaction 1,2-dihexadecanoyl-sn-glycero-3-phosphocholine + H2O = 1,2-dihexadecanoyl-sn-glycero-3-phosphate + choline + H(+). Its activity is regulated as follows. Stimulated by phosphatidylinositol 4,5-bisphosphate and phosphatidylinositol 3,4,5-trisphosphate, activated by the phosphokinase C-alpha, by the ADP-ribosylation factor-1 (ARF-1), and to a lesser extent by GTP-binding proteins: RHO A, RAC-1 and CDC42. Inhibited by oleate. Functionally, function as phospholipase selective for phosphatidylcholine. Implicated as a critical step in numerous cellular pathways, including signal transduction, membrane trafficking, and the regulation of mitosis. May be involved in the regulation of perinuclear intravesicular membrane traffic. The protein is Phospholipase D1 of Homo sapiens (Human).